The chain runs to 405 residues: Tyrosine--tRNA ligase (405 aa).

The 'HIGH' region motif lies at 41–50 (PTAPDLHLGH). The short motif at 225 to 229 (KMSKS) is the 'KMSKS' region element. Position 228 (Lys-228) interacts with ATP. In terms of domain architecture, S4 RNA-binding spans 342 to 404 (EPLLVWVLSK…GKKGKFLKII (63 aa)).

Belongs to the class-I aminoacyl-tRNA synthetase family. TyrS type 2 subfamily. Homodimer.

It localises to the cytoplasm. It catalyses the reaction tRNA(Tyr) + L-tyrosine + ATP = L-tyrosyl-tRNA(Tyr) + AMP + diphosphate + H(+). Catalyzes the attachment of tyrosine to tRNA(Tyr) in a two-step reaction: tyrosine is first activated by ATP to form Tyr-AMP and then transferred to the acceptor end of tRNA(Tyr). The sequence is that of Tyrosine--tRNA ligase from Leptospira interrogans serogroup Icterohaemorrhagiae serovar Lai (strain 56601).